The chain runs to 129 residues: Cuticle protein 12.5 (129 aa).

Tandem repeats lie at residues 7–10, 15–18, 23–26, 28–31, 37–40, 67–70, 79–82, 91–94, 103–106, and 117–120.

Functionally, component of the cuticle of migratory locust which contains more than 100 different structural proteins. The protein is Cuticle protein 12.5 of Locusta migratoria (Migratory locust).